Reading from the N-terminus, the 21-residue chain is Protein YadW (21 aa).

This Escherichia coli (strain K12) protein is Protein YadW.